Consider the following 597-residue polypeptide: Lipoprotein LpqB (597 aa).

The signal sequence occupies residues 1–28 (MTPGRRSALLSRSVCGAIVLAVLVTVSG). Residue Cys-29 is the site of N-palmitoyl cysteine attachment. The S-diacylglycerol cysteine moiety is linked to residue Cys-29. Residues 38–51 (PQAIGTINRDSPGS) show a composition bias toward polar residues. The interval 38-58 (PQAIGTINRDSPGSSVAAPAP) is disordered.

This sequence belongs to the LpqB lipoprotein family.

The protein localises to the cell membrane. In Rhodococcus jostii (strain RHA1), this protein is Lipoprotein LpqB.